Consider the following 196-residue polypeptide: Shikimate kinase (196 aa).

ATP is bound at residue 32-37 (GAGKSA). Ser36 lines the Mg(2+) pocket. Positions 54, 78, and 100 each coordinate substrate. Arg138 lines the ATP pocket. Arg157 contacts substrate. Arg174 serves as a coordination point for ATP.

It belongs to the shikimate kinase family. In terms of assembly, monomer. Mg(2+) serves as cofactor.

It is found in the cytoplasm. It carries out the reaction shikimate + ATP = 3-phosphoshikimate + ADP + H(+). It functions in the pathway metabolic intermediate biosynthesis; chorismate biosynthesis; chorismate from D-erythrose 4-phosphate and phosphoenolpyruvate: step 5/7. Functionally, catalyzes the specific phosphorylation of the 3-hydroxyl group of shikimic acid using ATP as a cosubstrate. The sequence is that of Shikimate kinase from Rhizobium leguminosarum bv. trifolii (strain WSM2304).